Reading from the N-terminus, the 294-residue chain is uncharacterized protein (294 aa).

Residues threonine 43 and tyrosine 104 each act as charge relay system in the active site. Tyrosine 130 serves as the catalytic Proton donor. Residue lysine 158 is the Schiff-base intermediate with substrate of the active site.

The protein belongs to the DapA family. Homotetramer.

It localises to the cytoplasm. This is an uncharacterized protein from Pyrococcus abyssi (strain GE5 / Orsay).